The following is a 374-amino-acid chain: Flagellar P-ring protein 1 (374 aa).

The signal sequence occupies residues 1 to 29 (MPGVRWVRIVGVACAALSALALSVTSASA).

Belongs to the FlgI family. The basal body constitutes a major portion of the flagellar organelle and consists of four rings (L,P,S, and M) mounted on a central rod.

Its subcellular location is the periplasm. The protein localises to the bacterial flagellum basal body. Its function is as follows. Assembles around the rod to form the L-ring and probably protects the motor/basal body from shearing forces during rotation. This chain is Flagellar P-ring protein 1, found in Bradyrhizobium diazoefficiens (strain JCM 10833 / BCRC 13528 / IAM 13628 / NBRC 14792 / USDA 110).